Consider the following 257-residue polypeptide: Imidazole glycerol phosphate synthase subunit HisF (257 aa).

Residues aspartate 11 and aspartate 130 contribute to the active site.

The protein belongs to the HisA/HisF family. In terms of assembly, heterodimer of HisH and HisF.

The protein resides in the cytoplasm. The catalysed reaction is 5-[(5-phospho-1-deoxy-D-ribulos-1-ylimino)methylamino]-1-(5-phospho-beta-D-ribosyl)imidazole-4-carboxamide + L-glutamine = D-erythro-1-(imidazol-4-yl)glycerol 3-phosphate + 5-amino-1-(5-phospho-beta-D-ribosyl)imidazole-4-carboxamide + L-glutamate + H(+). The protein operates within amino-acid biosynthesis; L-histidine biosynthesis; L-histidine from 5-phospho-alpha-D-ribose 1-diphosphate: step 5/9. Its function is as follows. IGPS catalyzes the conversion of PRFAR and glutamine to IGP, AICAR and glutamate. The HisF subunit catalyzes the cyclization activity that produces IGP and AICAR from PRFAR using the ammonia provided by the HisH subunit. This Shewanella denitrificans (strain OS217 / ATCC BAA-1090 / DSM 15013) protein is Imidazole glycerol phosphate synthase subunit HisF.